We begin with the raw amino-acid sequence, 284 residues long: Pseudouridine-5'-phosphate glycosidase (284 aa).

Glu17 acts as the Proton donor in catalysis. Residues Lys77 and Val97 each coordinate substrate. Asp126 is a Mn(2+) binding site. Position 128-130 (128-130) interacts with substrate; sequence SQD. Catalysis depends on Lys147, which acts as the Nucleophile.

It belongs to the pseudouridine-5'-phosphate glycosidase family. In terms of assembly, homotrimer. It depends on Mn(2+) as a cofactor.

The catalysed reaction is D-ribose 5-phosphate + uracil = psi-UMP + H2O. In terms of biological role, catalyzes the reversible cleavage of pseudouridine 5'-phosphate (PsiMP) to ribose 5-phosphate and uracil. Functions biologically in the cleavage direction, as part of a pseudouridine degradation pathway. This is Pseudouridine-5'-phosphate glycosidase from Thermotoga neapolitana (strain ATCC 49049 / DSM 4359 / NBRC 107923 / NS-E).